We begin with the raw amino-acid sequence, 455 residues long: MSINDVTIDTSTYYSILGVPTNASTNEIRKSYMKLAKKLHPDKTKSEHTAELFKLVVDAHSILNNDQLRAEYDKKLILEGRFELHQHGAKQKNKDIRKGYTFKRNSKPYEQQPYGFGVQVPKGPHEESNYEANSNPHNENSSNNDTKMKSTNLHDTLSKDSEDKHGTDDASDIQPPTKSNDIANEVGSKRKSNSKDIHQDHSSNIGLNPLKKKKLEKKAVHATTTESRRYMRKKSEKKATPPIQPLADLQINDDWEKLREVLQRIEKEDSRGGKEFTLDIDVNEQMYNLSMESSDDEHTIPTKKRAKVGSNIQGNSRYFAQTAAYDMNQINANLGTRNTEDDRQASSKISITEIDDILDLLKERVPSPPKLGHLGVQRDQQNRALEYIKYTDELKKRILYVLSNSSTTEAMQHFNRHTQSVLAHKTMELRLCEKLTEIQKCQQGVIEYFSRTALG.

Residues 12 to 76 enclose the J domain; sequence TYYSILGVPT…QLRAEYDKKL (65 aa). A disordered region spans residues 104 to 241; sequence RNSKPYEQQP…RKKSEKKATP (138 aa). The segment covering 133 to 144 has biased composition (low complexity); sequence NSNPHNENSSNN. The segment covering 156 to 168 has biased composition (basic and acidic residues); the sequence is TLSKDSEDKHGTD.

The protein localises to the cytoplasm. It is found in the nucleus. The polypeptide is J protein JJJ2 (JJJ2) (Candida glabrata (strain ATCC 2001 / BCRC 20586 / JCM 3761 / NBRC 0622 / NRRL Y-65 / CBS 138) (Yeast)).